A 535-amino-acid chain; its full sequence is Phosphoenolpyruvate carboxykinase (ATP) (535 aa).

Residues arginine 59, tyrosine 201, and lysine 207 each coordinate substrate. Residues lysine 207, histidine 226, and 243–251 (GLSGTGKTT) contribute to the ATP site. Residues lysine 207 and histidine 226 each contribute to the Mn(2+) site. Aspartate 264 is a Mn(2+) binding site. Residues glutamate 292, arginine 328, 444–445 (RI), and threonine 450 each bind ATP. A substrate-binding site is contributed by arginine 328.

Belongs to the phosphoenolpyruvate carboxykinase (ATP) family. The cofactor is Mn(2+).

The protein resides in the cytoplasm. It carries out the reaction oxaloacetate + ATP = phosphoenolpyruvate + ADP + CO2. The protein operates within carbohydrate biosynthesis; gluconeogenesis. In terms of biological role, involved in the gluconeogenesis. Catalyzes the conversion of oxaloacetate (OAA) to phosphoenolpyruvate (PEP) through direct phosphoryl transfer between the nucleoside triphosphate and OAA. The sequence is that of Phosphoenolpyruvate carboxykinase (ATP) from Porphyromonas gingivalis (strain ATCC 33277 / DSM 20709 / CIP 103683 / JCM 12257 / NCTC 11834 / 2561).